The sequence spans 202 residues: Protein-methionine-sulfoxide reductase heme-binding subunit MsrQ (202 aa).

The next 6 membrane-spanning stretches (helical) occupy residues L8–F28, L42–L62, L75–L95, P110–N130, L147–L167, and E169–A189.

The protein belongs to the MsrQ family. Heterodimer of a catalytic subunit (MsrP) and a heme-binding subunit (MsrQ). The cofactor is FMN. Requires heme b as cofactor.

Its subcellular location is the cell inner membrane. Functionally, part of the MsrPQ system that repairs oxidized periplasmic proteins containing methionine sulfoxide residues (Met-O), using respiratory chain electrons. Thus protects these proteins from oxidative-stress damage caused by reactive species of oxygen and chlorine generated by the host defense mechanisms. MsrPQ is essential for the maintenance of envelope integrity under bleach stress, rescuing a wide series of structurally unrelated periplasmic proteins from methionine oxidation. MsrQ provides electrons for reduction to the reductase catalytic subunit MsrP, using the quinone pool of the respiratory chain. This Pseudomonas paraeruginosa (strain DSM 24068 / PA7) (Pseudomonas aeruginosa (strain PA7)) protein is Protein-methionine-sulfoxide reductase heme-binding subunit MsrQ.